Reading from the N-terminus, the 195-residue chain is Interferon tau (195 aa).

The N-terminal stretch at 1-23 (MAFVLSLLMALVLASYSPGGSLG) is a signal peptide. 2 disulfides stabilise this stretch: cysteine 24-cysteine 122 and cysteine 52-cysteine 162.

It belongs to the alpha/beta interferon family. IFN-alphaII subfamily. In terms of tissue distribution, constitutively and exclusively expressed in the mononuclear cells of the extraembryonic trophectoderm.

The protein resides in the secreted. In terms of biological role, paracrine hormone primarily responsible for maternal recognition of pregnancy. Interacts with endometrial receptors, probably type I interferon receptors, and blocks estrogen receptor expression, preventing the estrogen-induced increase in oxytocin receptor expression in the endometrium. This results in the suppression of the pulsatile endometrial release of the luteolytic hormone prostaglandin F2-alpha, hindering the regression of the corpus luteum (luteolysis) and therefore a return to ovarian cyclicity. This, and a possible direct effect of IFN-tau on prostaglandin synthesis, leads in turn to continued ovarian progesterone secretion, which stimulates the secretion by the endometrium of the nutrients required for the growth of the conceptus. In summary, displays particularly high antiviral and antiproliferative potency concurrently with particular weak cytotoxicity, high antiluteolytic activity and immunomodulatory properties. In contrast with other IFNs, IFN-tau is not virally inducible. The polypeptide is Interferon tau (IFNT) (Cervus elaphus (Red deer)).